The sequence spans 173 residues: Alpha-crystallin A chain (173 aa).

The residue at position 1 (methionine 1) is an N-acetylmethionine. Residues 1 to 63 form a required for complex formation with BFSP1 and BFSP2 region; the sequence is MDIAIQHPWF…RTVLDSGISE (63 aa). Glutamine 6 carries the post-translational modification Deamidated glutamine; partial. Residue serine 45 is modified to Phosphoserine. At glutamine 50 the chain carries Deamidated glutamine; partial. The 111-residue stretch at 52–162 folds into the sHSP domain; sequence LFRTVLDSGI…GHSERAIPVS (111 aa). N6-acetyllysine occurs at positions 70 and 99. Histidine 100 contributes to the Zn(2+) binding site. Deamidated asparagine; partial is present on asparagine 101. Residues glutamate 102 and histidine 107 each coordinate Zn(2+). The residue at position 122 (serine 122) is a Phosphoserine. Residue asparagine 123 is modified to Deamidated asparagine; partial. Residues 144 to 173 form a disordered region; that stretch reads PKVPSGMDAGHSERAIPVSREEKPSSAPSS. Basic and acidic residues predominate over residues 153–167; sequence GHSERAIPVSREEKP. Histidine 154 is a binding site for Zn(2+). An O-linked (GlcNAc) serine glycan is attached at serine 162.

It belongs to the small heat shock protein (HSP20) family. As to quaternary structure, heteromer composed of three CRYAA and one CRYAB subunits. Inter-subunit bridging via zinc ions enhances stability, which is crucial as there is no protein turn over in the lens. Can also form homodimers and homotetramers (dimers of dimers) which serve as the building blocks of homooligomers. Within homooligomers, the zinc-binding motif is created from residues of 3 different molecules. His-100 and Glu-102 from one molecule are ligands of the zinc ion, and His-107 and His-154 residues from additional molecules complete the site with tetrahedral coordination geometry. Part of a complex required for lens intermediate filament formation composed of BFSP1, BFSP2 and CRYAA. Acetylation at Lys-70 may increase chaperone activity. In terms of processing, undergoes age-dependent proteolytical cleavage at the C-terminus.

It is found in the cytoplasm. The protein localises to the nucleus. Functionally, contributes to the transparency and refractive index of the lens. Acts as a chaperone, preventing aggregation of various proteins under a wide range of stress conditions. Required for the correct formation of lens intermediate filaments as part of a complex composed of BFSP1, BFSP2 and CRYAA. The protein is Alpha-crystallin A chain (CRYAA) of Melursus ursinus (Sloth bear).